A 250-amino-acid polypeptide reads, in one-letter code: 5-oxoprolinase subunit A (250 aa).

Belongs to the LamB/PxpA family. Forms a complex composed of PxpA, PxpB and PxpC.

The catalysed reaction is 5-oxo-L-proline + ATP + 2 H2O = L-glutamate + ADP + phosphate + H(+). Its function is as follows. Catalyzes the cleavage of 5-oxoproline to form L-glutamate coupled to the hydrolysis of ATP to ADP and inorganic phosphate. This chain is 5-oxoprolinase subunit A, found in Pseudomonas fluorescens (strain Pf0-1).